The primary structure comprises 67 residues: DNA-directed RNA polymerase subunit omega (67 aa).

Belongs to the RNA polymerase subunit omega family. The RNAP catalytic core consists of 2 alpha, 1 beta, 1 beta' and 1 omega subunit. When a sigma factor is associated with the core the holoenzyme is formed, which can initiate transcription.

The enzyme catalyses RNA(n) + a ribonucleoside 5'-triphosphate = RNA(n+1) + diphosphate. Its function is as follows. Promotes RNA polymerase assembly. Latches the N- and C-terminal regions of the beta' subunit thereby facilitating its interaction with the beta and alpha subunits. In Treponema pallidum (strain Nichols), this protein is DNA-directed RNA polymerase subunit omega (rpoZ).